The sequence spans 1007 residues: Integrator complex subunit 8 (1007 aa).

Residues 19–24 (WFEFLL) carry the WFEF motif motif. Residues 56–78 (TAQESVGTPGSDLQNLNQTPSNS) show a composition bias toward polar residues. The disordered stretch occupies residues 56–112 (TAQESVGTPGSDLQNLNQTPSNSGPIPGVVGGAPAPTTPTASGGVGMPHSPQRPAEK). The span at 79-97 (GPIPGVVGGAPAPTTPTAS) shows a compositional bias: low complexity.

Belongs to the Integrator subunit 8 family. As to quaternary structure, belongs to the multiprotein complex Integrator, at least composed of IntS1, IntS2, IntS3, IntS4, omd/IntS5, IntS6, defl/IntS7, IntS8, IntS9, IntS10, IntS11, IntS12, asun/IntS13, IntS14 and IntS15. The core complex associates with protein phosphatase 2A subunits mts/PP2A and Pp2A-29B, to form the Integrator-PP2A (INTAC) complex.

Its subcellular location is the nucleus. The protein resides in the chromosome. In terms of biological role, component of the integrator complex, a multiprotein complex that terminates RNA polymerase II (Pol II) transcription in the promoter-proximal region of genes. The integrator complex provides a quality checkpoint during transcription elongation by driving premature transcription termination of transcripts that are unfavorably configured for transcriptional elongation: the complex terminates transcription by (1) catalyzing dephosphorylation of the C-terminal domain (CTD) of Pol II subunit Polr2A/Rbp1 and Spt5, and (2) degrading the exiting nascent RNA transcript via endonuclease activity. The integrator complex is also involved in the 3'-end processing of the U7 snRNA, and also the spliceosomal snRNAs U1, U2, U4 and U5. Within the integrator complex, INTS8 is required for the recruitment of protein phosphatase 2A (PP2A) to transcription pause-release checkpoint. This chain is Integrator complex subunit 8, found in Drosophila melanogaster (Fruit fly).